A 285-amino-acid polypeptide reads, in one-letter code: Ubiquinone biosynthesis protein COQ4, mitochondrial (285 aa).

A mitochondrion-targeting transit peptide spans 1–11 (MPPAVRQGMRT). His166, Asp167, His170, and Glu182 together coordinate Zn(2+).

This sequence belongs to the COQ4 family. As to quaternary structure, component of a multi-subunit COQ enzyme complex, composed of at least COQ3, COQ4, COQ5, COQ6, COQ7 and COQ9. It depends on Zn(2+) as a cofactor.

It is found in the mitochondrion inner membrane. It catalyses the reaction a 4-hydroxy-3-methoxy-5-(all-trans-polyprenyl)benzoate + H(+) = a 2-methoxy-6-(all-trans-polyprenyl)phenol + CO2. The protein operates within cofactor biosynthesis; ubiquinone biosynthesis. Its function is as follows. Lyase that catalyzes the C1-decarboxylation of 4-hydroxy-3-methoxy-5-(all-trans-polyprenyl)benzoic acid into 2-methoxy-6-(all-trans-polyprenyl)phenol during ubiquinone biosynthesis. The chain is Ubiquinone biosynthesis protein COQ4, mitochondrial from Paracoccidioides lutzii (strain ATCC MYA-826 / Pb01) (Paracoccidioides brasiliensis).